We begin with the raw amino-acid sequence, 191 residues long: dITP/XTP pyrophosphatase (191 aa).

Residue 8–13 coordinates substrate; sequence SKNQGK. 2 residues coordinate Mg(2+): glutamate 38 and aspartate 67. Aspartate 67 functions as the Proton acceptor in the catalytic mechanism. Substrate is bound by residues serine 68, 146 to 149, lysine 169, and 174 to 175; these read FGYD and HR.

Belongs to the HAM1 NTPase family. Homodimer. Mg(2+) is required as a cofactor.

It catalyses the reaction XTP + H2O = XMP + diphosphate + H(+). It carries out the reaction dITP + H2O = dIMP + diphosphate + H(+). The enzyme catalyses ITP + H2O = IMP + diphosphate + H(+). In terms of biological role, pyrophosphatase that catalyzes the hydrolysis of nucleoside triphosphates to their monophosphate derivatives, with a high preference for the non-canonical purine nucleotides XTP (xanthosine triphosphate), dITP (deoxyinosine triphosphate) and ITP. Seems to function as a house-cleaning enzyme that removes non-canonical purine nucleotides from the nucleotide pool, thus preventing their incorporation into DNA/RNA and avoiding chromosomal lesions. This is dITP/XTP pyrophosphatase from Prochlorococcus marinus subsp. pastoris (strain CCMP1986 / NIES-2087 / MED4).